The chain runs to 879 residues: Paramyosin, long form (879 aa).

The segment at 1-31 (MSSSQAVRSSKYSYRATSTGPGTADVNIEYI) is nonhelical region. Phosphoserine is present on serine 18. The stretch at 32-858 (QDLSSLSRLE…IIRAKHRTFV (827 aa)) forms a coiled coil. The nonhelical region stretch occupies residues 859–879 (TTSTVPGSQVYIQETTRTITE).

The protein belongs to the paramyosin family. As to quaternary structure, heterodimer of two isoforms. The more-acidic and less-abundant isoform is phosphorylated. As to expression, expressed in all larval and adult muscle tissues. Expression is five times higher in tubular than in fibrillar muscles.

The protein resides in the cytoplasm. The protein localises to the myofibril. Paramyosin is a major structural component of many thick filaments isolated from invertebrate muscles. The protein is Paramyosin, long form (Prm) of Drosophila melanogaster (Fruit fly).